The sequence spans 63 residues: Conotoxin Vi5.1a (63 aa).

The signal sequence occupies residues 1–22 (MRCVPVFIILLLLIPSAPSADA). Positions 23 to 50 (QPKTKDDVPLASYHDNAERTLQRLWNQR) are excised as a propeptide. Residue P62 is modified to Proline amide.

It belongs to the conotoxin T superfamily. In terms of processing, contains 2 disulfide bonds that can be either 'C1-C3, C2-C4' or 'C1-C4, C2-C3', since these disulfide connectivities have been observed for conotoxins with cysteine framework V (for examples, see AC P0DQQ7 and AC P81755). In terms of tissue distribution, expressed by the venom duct.

Its subcellular location is the secreted. In Conus virgo (Virgin cone), this protein is Conotoxin Vi5.1a.